The following is a 243-amino-acid chain: Vesicle-associated membrane protein-associated protein B (243 aa).

Residue Ala2 is modified to N-acetylalanine. Residues 2-218 (AKVEQVLSLE…AALAASGKEE (217 aa)) lie on the Cytoplasmic side of the membrane. The region spanning 7-124 (VLSLEPQHEL…MDSKLRCVFE (118 aa)) is the MSP domain. Position 146 is a phosphoserine (Ser146). Lys147 is covalently cross-linked (Glycyl lysine isopeptide (Lys-Gly) (interchain with G-Cter in SUMO1)). Position 159 is a phosphoserine (Ser159). Residues 161–196 (LDDAEVKKVMEECRRLQGEVQRLREESRQLKEEDGL) are a coiled coil. Ser206 is modified (phosphoserine). A helical; Anchor for type IV membrane protein membrane pass occupies residues 219–239 (GLSARLLALVVLFFIVGVIIG).

It belongs to the VAMP-associated protein (VAP) (TC 9.B.17) family. As to quaternary structure, homodimer, and heterodimer with VAPA. Interacts with VAMP1 and VAMP2. Interacts (via MSP domain) with ZFYVE27. Interacts with RMDN3. Interacts with KIF5A in a ZFYVE27-dependent manner. Interacts (via MSP domain) with STARD3 (via phospho-FFAT motif). Interacts with STARD3NL (via FFAT motif). Interacts with CERT1. Interacts with PLEKHA3 and SACM1L to form a ternary complex. Interacts with VPS13A (via FFAT motif). Interacts with RB1CC1 (via phosphorylated FFAT motif), MIGA2 (via phosphorylated FFAT motif), RMDN3 (via phosphorylated FFAT motif), OSBPL1A (via FFAT motif), KCNB1 (via phosphorylated FFAT motif) and KCNB2 (via phosphorylated FFAT motif). Interacts (via MSP domain) with WDR44; the interactions connect the endoplasmic reticulum (ER) with the endosomal tubule. Ubiquitous.

Its subcellular location is the endoplasmic reticulum membrane. Its function is as follows. Endoplasmic reticulum (ER)-anchored protein that mediates the formation of contact sites between the ER and endosomes via interaction with FFAT motif-containing proteins such as STARD3 or WDR44. Interacts with STARD3 in a FFAT motif phosphorylation dependent manner. Via interaction with WDR44 participates in neosynthesized protein export. Participates in the endoplasmic reticulum unfolded protein response (UPR) by inducing ERN1/IRE1 activity. Involved in cellular calcium homeostasis regulation. The protein is Vesicle-associated membrane protein-associated protein B of Rattus norvegicus (Rat).